The primary structure comprises 299 residues: Oxygen-dependent coproporphyrinogen-III oxidase (299 aa).

S92 serves as a coordination point for substrate. 2 residues coordinate a divalent metal cation: H96 and H106. H106 (proton donor) is an active-site residue. 108–110 contributes to the substrate binding site; sequence NVR. The a divalent metal cation site is built by H145 and H175. The segment at 240–275 is important for dimerization; sequence YVEFNLVWDRGTLFGLQTGGRTESILMSMPPLVRWE. 258-260 serves as a coordination point for substrate; it reads GGR.

This sequence belongs to the aerobic coproporphyrinogen-III oxidase family. In terms of assembly, homodimer. It depends on a divalent metal cation as a cofactor.

It is found in the cytoplasm. The catalysed reaction is coproporphyrinogen III + O2 + 2 H(+) = protoporphyrinogen IX + 2 CO2 + 2 H2O. It functions in the pathway porphyrin-containing compound metabolism; protoporphyrin-IX biosynthesis; protoporphyrinogen-IX from coproporphyrinogen-III (O2 route): step 1/1. Its function is as follows. Involved in the heme biosynthesis. Catalyzes the aerobic oxidative decarboxylation of propionate groups of rings A and B of coproporphyrinogen-III to yield the vinyl groups in protoporphyrinogen-IX. The sequence is that of Oxygen-dependent coproporphyrinogen-III oxidase from Salmonella arizonae (strain ATCC BAA-731 / CDC346-86 / RSK2980).